The primary structure comprises 463 residues: L-seryl-tRNA(Sec) selenium transferase (463 aa).

K295 carries the N6-(pyridoxal phosphate)lysine modification.

It belongs to the SelA family. As to quaternary structure, homodecamer; pentamer of dimers. Binds only one seryl-tRNA(Sec) per dimer. Pyridoxal 5'-phosphate is required as a cofactor.

The protein resides in the cytoplasm. The enzyme catalyses L-seryl-tRNA(Sec) + selenophosphate + H(+) = L-selenocysteinyl-tRNA(Sec) + phosphate. It functions in the pathway aminoacyl-tRNA biosynthesis; selenocysteinyl-tRNA(Sec) biosynthesis; selenocysteinyl-tRNA(Sec) from L-seryl-tRNA(Sec) (bacterial route): step 1/1. Converts seryl-tRNA(Sec) to selenocysteinyl-tRNA(Sec) required for selenoprotein biosynthesis. This is L-seryl-tRNA(Sec) selenium transferase from Shigella flexneri.